The primary structure comprises 813 residues: Protein tramtrack, alpha isoform (813 aa).

A BTB domain is found at 33 to 98 (TDVTLAVEGQ…MYRGEVSVDQ (66 aa)). 4 disordered regions span residues 118 to 148 (EVNDDKPSPAAAAAGAGATGSESTATTPQLQ), 171 to 324 (ANAG…GPSE), 356 to 428 (TTPA…MPKK), and 526 to 585 (AGLP…LDDQ). Residues 125-145 (SPAAAAAGAGATGSESTATTP) show a composition bias toward low complexity. The span at 176–187 (TPTLPVQPSLLS) shows a compositional bias: polar residues. A compositionally biased stretch (basic residues) spans 192-201 (PKRKRGRPRK). Residues Ser-203, Ser-205, and Ser-206 each carry the phosphoserine modification. Phosphothreonine is present on Thr-209. Residues 254 to 285 (HTDDLNESRDSLPSKRSKNSKDHRVVSHHEDN) show a composition bias toward basic and acidic residues. Polar residues-rich tracts occupy residues 302–324 (LFGSSSTTISATAPGGSSTGPSE), 356–369 (TTPAQQGSPQTPTK), and 377–388 (ATGSNNSNSLLK). A compositionally biased stretch (basic residues) spans 560 to 578 (SGKKGAKRPIQRRRVRRKA). C2H2-type zinc fingers lie at residues 610 to 638 (YRCTECAKENMQKTFKNKYSFQRHAFLYH) and 646 to 669 (FPCPVCSKEFSRPDKMKNHLKMTH). Ser-682 carries the post-translational modification Phosphoserine.

In terms of assembly, interacts with CoRest/CG33525, suggesting that it acts by recruiting a CoRest-containing corepressor complex. Interacts with phyl.

It localises to the nucleus. Binds to a number of sites in the transcriptional regulatory region of ftz. Isoform alpha is required to repress genes that promote the R7 cell fate. Probable repressor of the transcription of the segmentation genes ftz, eve, h, odd, run, and en. May bind to the region 5'-AGGG[CT]GG-3'. Degradation of ttk is directed by binding of sinah or sina, via the adapter molecule phyl which binds to the BTB domain of ttk. This is Protein tramtrack, alpha isoform (ttk) from Drosophila melanogaster (Fruit fly).